A 185-amino-acid chain; its full sequence is Ribosome-recycling factor (185 aa).

This sequence belongs to the RRF family.

The protein resides in the cytoplasm. Functionally, responsible for the release of ribosomes from messenger RNA at the termination of protein biosynthesis. May increase the efficiency of translation by recycling ribosomes from one round of translation to another. The protein is Ribosome-recycling factor of Lactococcus lactis subsp. cremoris (strain SK11).